A 75-amino-acid chain; its full sequence is Cytochrome c oxidase assembly factor 5 (75 aa).

The CHCH domain maps to 28–66; it reads QTDCVLQEGKSPKECLKEGYCKALQVTFFECKRSILDTR. The short motif at 31-42 is the Cx10C motif element; the sequence is CVLQEGKSPKEC. 2 disulfides stabilise this stretch: Cys31-Cys58 and Cys42-Cys48. The Cx9C motif motif lies at 48–58; the sequence is CKALQVTFFEC.

This sequence belongs to the PET191 family.

Its function is as follows. Involved in an early step of the mitochondrial complex IV assembly process. This is Cytochrome c oxidase assembly factor 5 (coa5) from Xenopus tropicalis (Western clawed frog).